The following is a 201-amino-acid chain: Sec-independent protein translocase protein TatB (201 aa).

The chain crosses the membrane as a helical span at residues 1–21 (MLDLGWSEILVIAVVLIVVVG). The disordered stretch occupies residues 96-201 (LSEAAKAKPA…RRKKTAGTAP (106 aa)). 2 stretches are compositionally biased toward low complexity: residues 102–114 (AKPA…AADS) and 159–187 (TSAK…APAK). Residues 189–201 (PSPRRKKTAGTAP) are compositionally biased toward basic residues.

Belongs to the TatB family. As to quaternary structure, the Tat system comprises two distinct complexes: a TatABC complex, containing multiple copies of TatA, TatB and TatC subunits, and a separate TatA complex, containing only TatA subunits. Substrates initially bind to the TatABC complex, which probably triggers association of the separate TatA complex to form the active translocon.

The protein resides in the cell inner membrane. In terms of biological role, part of the twin-arginine translocation (Tat) system that transports large folded proteins containing a characteristic twin-arginine motif in their signal peptide across membranes. Together with TatC, TatB is part of a receptor directly interacting with Tat signal peptides. TatB may form an oligomeric binding site that transiently accommodates folded Tat precursor proteins before their translocation. This chain is Sec-independent protein translocase protein TatB, found in Chelativorans sp. (strain BNC1).